A 540-amino-acid chain; its full sequence is Chaperonin GroEL (540 aa).

ATP-binding positions include 29–32 (TLGP), 86–90 (DGTTT), Gly413, 477–479 (DAL), and Asp493.

Belongs to the chaperonin (HSP60) family. Forms a cylinder of 14 subunits composed of two heptameric rings stacked back-to-back. Interacts with the co-chaperonin GroES.

The protein localises to the cytoplasm. The catalysed reaction is ATP + H2O + a folded polypeptide = ADP + phosphate + an unfolded polypeptide.. Its function is as follows. Together with its co-chaperonin GroES, plays an essential role in assisting protein folding. The GroEL-GroES system forms a nano-cage that allows encapsulation of the non-native substrate proteins and provides a physical environment optimized to promote and accelerate protein folding. The protein is Chaperonin GroEL of Clostridium botulinum (strain Alaska E43 / Type E3).